The sequence spans 837 residues: Granulocyte colony-stimulating factor receptor (837 aa).

The N-terminal stretch at 1–25 is a signal peptide; sequence MVGLGACTLTGVTLIFLLLPRSLES. 2 cysteine pairs are disulfide-bonded: cysteine 26–cysteine 52 and cysteine 46–cysteine 102. Residues 26 to 118 enclose the Ig-like C2-type domain; it reads CGHIEISPPV…SVQLLDQAEL (93 aa). Residues 26–626 lie on the Extracellular side of the membrane; the sequence is CGHIEISPPV…LTLRTLDPSD (601 aa). N-linked (GlcNAc...) asparagine glycans are attached at residues asparagine 51, asparagine 94, and asparagine 129. 5 Fibronectin type-III domains span residues 126–231, 236–331, 334–433, 434–529, and 530–624; these read SPSN…LEPP, LDIG…LRPT, APTI…NEGP, AVTG…GERA, and PPHA…TLDP. Intrachain disulfides connect cysteine 132–cysteine 143, cysteine 168–cysteine 219, cysteine 178–cysteine 187, cysteine 249–cysteine 296, and cysteine 267–cysteine 310. 2 N-linked (GlcNAc...) asparagine glycosylation sites follow: asparagine 186 and asparagine 279. The short motif at 319–323 is the WSXWS motif element; the sequence is WSPWS. N-linked (GlcNAc...) asparagine glycosylation is found at asparagine 392, asparagine 408, asparagine 474, asparagine 487, asparagine 582, and asparagine 613. A helical transmembrane segment spans residues 627-650; sequence LNIFLGILCLVLLSTTCVVTWLCC. Topologically, residues 651 to 837 are cytoplasmic; sequence KRRGKTSFWS…VHGVEEQGGF (187 aa). The Box 1 motif signature appears at 658-666; it reads FWSDVPDPA.

It belongs to the type I cytokine receptor family. Type 2 subfamily. In terms of assembly, homodimer. The dimeric receptor binds two CSF3 molecules. Interacts with CEACAM1; down-regulates the CSF3R-STAT3 pathway through recruitment of PTPN6 that dephosphorylates CSF3R. Post-translationally, N-glycosylated. Found in bone marrow.

It is found in the membrane. In terms of biological role, receptor for granulocyte colony-stimulating factor (CSF3). In addition it may function in some adhesion or recognition events at the cell surface. The polypeptide is Granulocyte colony-stimulating factor receptor (Csf3r) (Mus musculus (Mouse)).